Consider the following 205-residue polypeptide: Mitochondrial ATP-independent inner membrane protease subunit 2 (205 aa).

Catalysis depends on residues Glu-59 and Arg-104.

It belongs to the peptidase S26 family. IMP1 subfamily. As to quaternary structure, heterodimer of 2 subunits, IMP1A/B and IMP12.

It localises to the mitochondrion inner membrane. In terms of biological role, catalyzes the removal of transit peptides required for the targeting of proteins from the mitochondrial matrix, across the inner membrane, into the inter-membrane space. The chain is Mitochondrial ATP-independent inner membrane protease subunit 2 from Arabidopsis thaliana (Mouse-ear cress).